We begin with the raw amino-acid sequence, 106 residues long: Ribonuclease P protein component 4 (106 aa).

Residues Cys-57, Cys-60, Cys-83, and Cys-86 each coordinate Zn(2+).

It belongs to the eukaryotic/archaeal RNase P protein component 4 family. As to quaternary structure, consists of a catalytic RNA component and at least 4-5 protein subunits. Zn(2+) serves as cofactor.

The protein resides in the cytoplasm. It carries out the reaction Endonucleolytic cleavage of RNA, removing 5'-extranucleotides from tRNA precursor.. In terms of biological role, part of ribonuclease P, a protein complex that generates mature tRNA molecules by cleaving their 5'-ends. This Saccharolobus solfataricus (strain ATCC 35092 / DSM 1617 / JCM 11322 / P2) (Sulfolobus solfataricus) protein is Ribonuclease P protein component 4.